The primary structure comprises 513 residues: Xylose import ATP-binding protein XylG (513 aa).

ABC transporter domains are found at residues 5–242 (LEMK…VGRE) and 259–505 (LRVE…LRSE). Residue 37 to 44 (GENGSGKS) participates in ATP binding.

This sequence belongs to the ABC transporter superfamily. Xylose importer (TC 3.A.1.2.4) family. In terms of assembly, the complex is composed of two ATP-binding proteins (XylG), two transmembrane proteins (XylH) and a solute-binding protein (XylF).

It localises to the cell inner membrane. The catalysed reaction is D-xylose(out) + ATP + H2O = D-xylose(in) + ADP + phosphate + H(+). In terms of biological role, part of the ABC transporter complex XylFGH involved in xylose import. Responsible for energy coupling to the transport system. The sequence is that of Xylose import ATP-binding protein XylG from Pectobacterium atrosepticum (strain SCRI 1043 / ATCC BAA-672) (Erwinia carotovora subsp. atroseptica).